The sequence spans 272 residues: tRNA pseudouridine synthase B (272 aa).

Asp-38 (nucleophile) is an active-site residue.

It belongs to the pseudouridine synthase TruB family. Type 1 subfamily.

The enzyme catalyses uridine(55) in tRNA = pseudouridine(55) in tRNA. Responsible for synthesis of pseudouridine from uracil-55 in the psi GC loop of transfer RNAs. The protein is tRNA pseudouridine synthase B of Campylobacter jejuni (strain RM1221).